Consider the following 358-residue polypeptide: Nitric oxide synthase oxygenase (358 aa).

Residue cysteine 62 coordinates heme.

Belongs to the NOS family. Bacterial NOS oxygenase subfamily. In terms of assembly, homodimer. It depends on heme as a cofactor. The cofactor is (6S)-5,6,7,8-tetrahydrofolate.

The enzyme catalyses 3 reduced [flavodoxin] + 2 L-arginine + 4 O2 = 3 oxidized [flavodoxin] + 2 L-citrulline + 2 nitric oxide + 4 H2O + 5 H(+). Functionally, catalyzes the production of nitric oxide. The polypeptide is Nitric oxide synthase oxygenase (nos) (Staphylococcus aureus (strain COL)).